A 695-amino-acid polypeptide reads, in one-letter code: Protein EARLY FLOWERING 3 (695 aa).

Basic and acidic residues predominate over residues 1–11 (MKRGKDEEKIL). Disordered stretches follow at residues 1–33 (MKRG…APPR), 48–75 (RFGD…SQPC), 136–159 (RSQS…VAPS), 216–283 (EKSA…REYS), and 541–653 (CSSQ…QTTR). Residues 54-74 (TMNSRSNNTSTLVHPGPSSQP) show a composition bias toward polar residues. Basic and acidic residues-rich tracts occupy residues 216–226 (EKSASSHDRVN), 234–253 (QESR…KDTD), and 260–283 (LATE…REYS). Residues 261–484 (ATENHSQEGH…VMSPSEGLIY (224 aa)) are interaction with ELF3. Polar residues-rich tracts occupy residues 551–567 (PNEQ…LQNT) and 579–588 (APQQQQQPTK). Low complexity-rich tracts occupy residues 598 to 616 (QGST…GSKS) and 636 to 653 (TMTT…QTTR).

As to quaternary structure, interacts specifically with both Pr and Pfr forms of phytochrome B. Interacts with ELF4. May form a homodimer.

The protein resides in the nucleus. Its function is as follows. May be a transcription factor part of a circadian clock input pathway. Acts within a 'zeitnehmer' feedback loop and is involved in its own circadian regulation. Has no role in regulating circadian clock function in the dark. Part of a corepressor complex consisting of ELF4, ELF3, and LUX involved in the transcriptional regulation of APRR9. The activity of the protein may be decreased in long day conditions due to its interaction with phytochrome B (phyB). Can regulate the initiation of flowering independently of phyB. Also involved in responses to nematode parasitism, like the formation of the nematode feeding structure. The sequence is that of Protein EARLY FLOWERING 3 (ELF3) from Arabidopsis thaliana (Mouse-ear cress).